Consider the following 432-residue polypeptide: Glutamate-gated chloride channel subunit beta (432 aa).

The signal sequence occupies residues 1 to 18 (MSQYMMVAVAAVVAVAGS). The Extracellular segment spans residues 19 to 249 (SQISRRSTGG…MQLTLKRQFS (231 aa)). N-linked (GlcNAc...) asparagine glycosylation occurs at Asn-52. Residues Arg-69, Arg-88, and Ser-155 each coordinate L-glutamate. A disulfide bridge links Cys-164 with Cys-178. L-glutamate is bound at residue Ser-184. Asn-219 carries an N-linked (GlcNAc...) asparagine glycan. Cysteines 226 and 237 form a disulfide. The helical transmembrane segment at 250 to 272 (YYLVQLYGPTTMIVIVSWVSFWI) threads the bilayer. Over 273 to 277 (DMHST) the chain is Cytoplasmic. A helical transmembrane segment spans residues 278-299 (AGRVALGVTTLLTMTTMQAAIN). Residues 300–306 (AKLPPVS) lie on the Extracellular side of the membrane. The chain crosses the membrane as a helical span at residues 307–327 (YVKVVDVWLGACQTFVFGALL). Topologically, residues 328–402 (EYAFVSYQDS…KPDYLPAKID (75 aa)) are cytoplasmic. Residues 403–426 (YYARFCVPLGFLAFNAIYWTSCLV) form a helical membrane-spanning segment. The Extracellular portion of the chain corresponds to 427–432 (MVSRLV).

The protein belongs to the ligand-gated ion channel (TC 1.A.9) family. Glutamate-gated chloride channel (TC 1.A.9.4) subfamily. As to quaternary structure, pentamer. Expressed in motor neuron commissures at the anterior portion of the worms.

The protein resides in the postsynaptic cell membrane. The protein localises to the cell membrane. Functionally, glutamate-gated chloride channel subunit; channel properties may be modulated by the formation of heteromeric channels. Glutamate binding triggers a rapidly reversible current, while the anti-helmintic drug ivermectin triggers a permanently open channel configuration. This chain is Glutamate-gated chloride channel subunit beta, found in Haemonchus contortus (Barber pole worm).